Reading from the N-terminus, the 860-residue chain is Anoctamin-7 (860 aa).

The Cytoplasmic portion of the chain corresponds to 1 to 297 (MLRKQAGEED…YFAWLGFYTG (297 aa)). Positions 24–50 (NGCSYGSTAQASEAGKQQVAPSRVGSS) are disordered. The helical transmembrane segment at 298–318 (WLLPAAVVGTVVFLAGCFLVF) threads the bilayer. The Extracellular portion of the chain corresponds to 319-362 (SDVPTQELCHSSDTFDMCPLCSDCSFWLLSSACTLAQAGRLFDH). Residues 363 to 383 (GGTVFFSLFMALWAVLLLEYW) traverse the membrane as a helical segment. The Cytoplasmic segment spans residues 384–441 (KRKNATLAYRWDCSDYEDIEERPRPQFAATAPMTALNPITGEDEPYFPEKNRVRRMLA). The helical transmembrane segment at 442 to 462 (GSVVLLMMVAVVIMCLVSIIL) threads the bilayer. Over 463-492 (YRAVMAIIVSKSNNAFLSAWASRIASLTGS) the chain is Extracellular. Residues 493–513 (VVNLVFILILSKVYVILAQVL) form a helical membrane-spanning segment. The Cytoplasmic segment spans residues 514-530 (TRWEMHRTQTAFEDAFT). Residues 531-551 (LKVFIFQFVNFYASPVYIAFF) form a helical membrane-spanning segment. Residues 552 to 652 (KGRFVGYPGN…FHEYLEMVLQ (101 aa)) lie on the Extracellular side of the membrane. The helical transmembrane segment at 653–673 (FGFVTIFVAACPLAPLFALLN) threads the bilayer. Over 674-701 (NWVEIRLDARKFVCEYRRPVAERAQDIG) the chain is Cytoplasmic. Residues 702-722 (IWFHILAGLTHLAVISNAFLL) form a helical membrane-spanning segment. Topologically, residues 723-779 (AFSSDFLPRVYYSWTRAPDLRGFLNFTLARAPPTFTSAHNRTCRYRAFRDDDGHYSP) are extracellular. 2 N-linked (GlcNAc...) asparagine glycosylation sites follow: N747 and N762. A helical transmembrane segment spans residues 780 to 800 (TYWTLLAIRLAFVIVFEHVVF). The Cytoplasmic segment spans residues 801-860 (STGRFLDLLVPDIPESVEIKVKREYYLAKQALADNEALLGATGVKGEQPPSSEPSLGLPA).

This sequence belongs to the anoctamin family.

The protein localises to the cell membrane. It is found in the endoplasmic reticulum. The enzyme catalyses a 1,2-diacyl-sn-glycero-3-phospho-L-serine(in) = a 1,2-diacyl-sn-glycero-3-phospho-L-serine(out). The catalysed reaction is a beta-D-galactosyl-(1&lt;-&gt;1')-N-acylsphing-4-enine(out) = a beta-D-galactosyl-(1&lt;-&gt;1')-N-acylsphing-4-enine(in). It carries out the reaction a 1,2-diacyl-sn-glycero-3-phosphocholine(in) = a 1,2-diacyl-sn-glycero-3-phosphocholine(out). Has calcium-dependent phospholipid scramblase activity; scrambles phosphatidylserine, phosphatidylcholine and galactosylceramide. Does not exhibit calcium-activated chloride channel (CaCC) activity. May play a role in cell-cell interactions. The sequence is that of Anoctamin-7 (Ano7) from Rattus norvegicus (Rat).